A 38-amino-acid polypeptide reads, in one-letter code: Defensin-like peptide 3 (38 aa).

Disulfide bonds link C6/C36 and C13/C29.

As to expression, produced by the crural gland and detected in venom from the spur located on each male hind leg.

It localises to the secreted. Its function is as follows. Does not show antimicrobial, myotoxic, hemolytic and cell-promoting activities. The sequence is that of Defensin-like peptide 3 from Ornithorhynchus anatinus (Duckbill platypus).